The following is a 748-amino-acid chain: Cytosolic phospholipase A2 (748 aa).

Residues 1 to 178 (MSFIDPYQHI…MKKLLGPKKS (178 aa)) are phospholipid binding. At S2 the chain carries Phosphoserine. The C2 domain occupies 6–122 (PYQHIIVEHQ…KVGEKKEVPF (117 aa)). Ca(2+) contacts are provided by D40, T41, D43, N65, D93, A94, and N95. One can recognise a PLA2c domain in the interval 140-739 (SCPDLRFSMA…SNVEARKFFN (600 aa)). Residue S228 is the Nucleophile of the active site. At T268 the chain carries Phosphothreonine. The tract at residues 427–458 (KHIVSNDSSDSDDEAQGPKGTENEEAEKEYQS) is disordered. S434, S435, and S437 each carry phosphoserine. S505 is modified (phosphoserine; by MAPK). A Phosphoserine modification is found at S515. K540 is covalently cross-linked (Glycyl lysine isopeptide (Lys-Gly) (interchain with G-Cter in SUMO2)). Residue D548 is the Proton acceptor of the active site. K605 participates in a covalent cross-link: Glycyl lysine isopeptide (Lys-Gly) (interchain with G-Cter in SUMO2). 2 positions are modified to phosphoserine: S726 and S728.

As to quaternary structure, interacts with KAT5. In terms of processing, phosphorylated at both Ser-505 and Ser-726 in response to mitogenic stimuli. As to expression, expressed in various organs including uterus, kidney, spleen, liver, heart, lung and brain (at protein level).

It localises to the cytoplasm. It is found in the golgi apparatus membrane. Its subcellular location is the nucleus envelope. The enzyme catalyses a 1,2-diacyl-sn-glycero-3-phosphocholine + H2O = a 1-acyl-sn-glycero-3-phosphocholine + a fatty acid + H(+). The catalysed reaction is a 1-O-alkyl-2-acyl-sn-glycero-3-phosphocholine + H2O = a 1-O-alkyl-sn-glycero-3-phosphocholine + a fatty acid + H(+). It carries out the reaction a 1-acyl-sn-glycero-3-phosphocholine + H2O = sn-glycerol 3-phosphocholine + a fatty acid + H(+). It catalyses the reaction 1-hexadecanoyl-2-(5Z,8Z,11Z,14Z-eicosatetraenoyl)-sn-glycero-3-phosphocholine + H2O = 1-hexadecanoyl-sn-glycero-3-phosphocholine + (5Z,8Z,11Z,14Z)-eicosatetraenoate + H(+). The enzyme catalyses 1,2-di-(5Z,8Z,11Z,14Z-eicosatetraenoyl)-sn-glycero-3-phosphocholine + H2O = 1-(5Z,8Z,11Z,14Z-eicosatetraenoyl)-sn-glycero-3-phosphocholine + (5Z,8Z,11Z,14Z)-eicosatetraenoate + H(+). The catalysed reaction is 1-octadecanoyl-2-(5Z,8Z,11Z,14Z-eicosatetraenoyl)-sn-glycero-3-phosphocholine + H2O = 1-octadecanoyl-sn-glycero-3-phosphocholine + (5Z,8Z,11Z,14Z)-eicosatetraenoate + H(+). It carries out the reaction 1-hexadecanoyl-2-(9Z,12Z-octadecadienoyl)-sn-glycero-3-phosphocholine + H2O = (9Z,12Z)-octadecadienoate + 1-hexadecanoyl-sn-glycero-3-phosphocholine + H(+). It catalyses the reaction 1-octadecanoyl-2-(9Z,12Z,15Z-octadecatrienoyl)-sn-glycero-3-phosphocholine + H2O = (9Z,12Z,15Z)-octadecatrienoate + 1-octadecanoyl-sn-glycero-3-phosphocholine + H(+). The enzyme catalyses 1-(5Z,8Z,11Z,14Z-eicosatetraenoyl)-2-hexadecanoyl-sn-glycero-3-phosphocholine + H2O = 1-(5Z,8Z,11Z,14Z-eicosatetraenoyl)-sn-glycero-3-phosphocholine + hexadecanoate + H(+). The catalysed reaction is 1-O-hexadecyl-2-(5Z,8Z,11Z,14Z)-eicosatetraenoyl-sn-glycero-3-phosphocholine + H2O = 1-O-hexadecyl-sn-glycero-3-phosphocholine + (5Z,8Z,11Z,14Z)-eicosatetraenoate + H(+). It carries out the reaction 1,2-di-(9Z-octadecenoyl)-sn-glycero-3-phospho-(1'-sn-glycerol) + H2O = 1-(9Z-octadecenoyl)-sn-glycero-3-phospho-(1'-sn-glycerol) + (9Z)-octadecenoate + H(+). It catalyses the reaction 1-octadecanoyl-2-(5Z,8Z,11Z,14Z-eicosatetraenoyl)-sn-glycero-3-phosphate + H2O = 1-octadecanoyl-sn-glycero-3-phosphate + (5Z,8Z,11Z,14Z)-eicosatetraenoate + H(+). The enzyme catalyses 1-hexadecanoyl-sn-glycero-3-phosphocholine + H2O = sn-glycerol 3-phosphocholine + hexadecanoate + H(+). The catalysed reaction is 2-(prostaglandin E2)-sn-glycero-3-phosphoethanolamine + H2O = sn-glycero-3-phosphoethanolamine + prostaglandin E2 + H(+). It carries out the reaction 2-[(15S)-hydroxy-(5Z,8Z,11Z,13E)-eicosatetraenoyl]-sn-glycero-3-phosphocholine + H2O = (15S)-hydroxy-(5Z,8Z,11Z,13E)-eicosatetraenoate + sn-glycerol 3-phosphocholine + H(+). It catalyses the reaction 2-[(15R)-hydroxy-(5Z,8Z,11Z,13E)-eicosatetraenoyl]-sn-glycero-3-phosphocholine + H2O = (15R)-hydroxy-(5Z,8Z,11Z,13E)-eicosatetraenoate + sn-glycerol 3-phosphocholine + H(+). The enzyme catalyses 2-(prostaglandin E2)-sn-glycero-3-phosphocholine + H2O = prostaglandin E2 + sn-glycerol 3-phosphocholine + H(+). The catalysed reaction is 2-[(11R)-hydroxy-(5Z,8Z,12E,14Z)-eicosatetraenoyl]-sn-glycero-3-phosphocholine + H2O = (11R)-hydroxy-(5Z,8Z,12E,14Z)-eicosatetraenoate + sn-glycerol 3-phosphocholine + H(+). It carries out the reaction 1-(5Z,8Z,11Z,14Z-eicosatetraenoyl)-2-O-hexadecyl-sn-glycero-3-phosphocholine + H2O = 2-O-hexadecyl-sn-glycero-3-phosphocholine + (5Z,8Z,11Z,14Z)-eicosatetraenoate + H(+). It catalyses the reaction 1-octadecanoyl-2-(5Z,8Z,11Z,14Z-eicosatetraenoyl)-sn-glycero-3-phosphocholine + glycerol = 1-(5Z,8Z,11Z,14Z-eicosatetraenoyl)-glycerol + 1-octadecanoyl-sn-glycero-3-phosphocholine. The enzyme catalyses 1-octadecanoyl-2-(9Z,12Z,15Z-octadecatrienoyl)-sn-glycero-3-phosphocholine + glycerol = 1-(9Z,12Z,15Z-octadecatrienoyl)-glycerol + 1-octadecanoyl-sn-glycero-3-phosphocholine. Its pathway is membrane lipid metabolism; glycerophospholipid metabolism. It functions in the pathway lipid metabolism; arachidonate metabolism. The protein operates within lipid metabolism; prostaglandin biosynthesis. It participates in lipid metabolism; leukotriene B4 biosynthesis. With respect to regulation, activated by cytosolic calcium, which is necessary for binding to membrane lipids. Activated by phosphorylation in response to mitogenic stimuli. Stimulated by agonists such as ATP and thrombin. In terms of biological role, has primarily calcium-dependent phospholipase and lysophospholipase activities, with a major role in membrane lipid remodeling and biosynthesis of lipid mediators of the inflammatory response. Plays an important role in embryo implantation and parturition through its ability to trigger prostanoid production. Preferentially hydrolyzes the ester bond of the fatty acyl group attached at sn-2 position of phospholipids (phospholipase A2 activity). Selectively hydrolyzes sn-2 arachidonoyl group from membrane phospholipids, providing the precursor for eicosanoid biosynthesis via the cyclooxygenase pathway. In an alternative pathway of eicosanoid biosynthesis, hydrolyzes sn-2 fatty acyl chain of eicosanoid lysophopholipids to release free bioactive eicosanoids. Hydrolyzes the ester bond of the fatty acyl group attached at sn-1 position of phospholipids (phospholipase A1 activity) only if an ether linkage rather than an ester linkage is present at the sn-2 position. This hydrolysis is not stereospecific. Has calcium-independent phospholipase A2 and lysophospholipase activities in the presence of phosphoinositides. Has O-acyltransferase activity. Catalyzes the transfer of fatty acyl chains from phospholipids to a primary hydroxyl group of glycerol (sn-1 or sn-3), potentially contributing to monoacylglycerol synthesis. In Mus musculus (Mouse), this protein is Cytosolic phospholipase A2 (Pla2g4a).